The chain runs to 635 residues: Threonine--tRNA ligase (635 aa).

The TGS domain maps to 1–61 (MTVVRLPDGT…ETDSDLVLIT (61 aa)). A catalytic region spans residues 242–533 (DHRKLGKQLD…LIEHHAGALP (292 aa)). Residues Cys333, His384, and His510 each coordinate Zn(2+).

Belongs to the class-II aminoacyl-tRNA synthetase family. As to quaternary structure, homodimer. Zn(2+) serves as cofactor.

The protein resides in the cytoplasm. It carries out the reaction tRNA(Thr) + L-threonine + ATP = L-threonyl-tRNA(Thr) + AMP + diphosphate + H(+). Its function is as follows. Catalyzes the attachment of threonine to tRNA(Thr) in a two-step reaction: L-threonine is first activated by ATP to form Thr-AMP and then transferred to the acceptor end of tRNA(Thr). Also edits incorrectly charged L-seryl-tRNA(Thr). In Nitrosomonas europaea (strain ATCC 19718 / CIP 103999 / KCTC 2705 / NBRC 14298), this protein is Threonine--tRNA ligase.